The sequence spans 409 residues: Putative competence-damage inducible protein (409 aa).

Belongs to the CinA family.

The sequence is that of Putative competence-damage inducible protein from Clostridium botulinum (strain Langeland / NCTC 10281 / Type F).